The primary structure comprises 356 residues: MAGLKLQAVTKSWDGKTQVIKPLTLDVADGEFIVMVGPSGCGKSTLLRMVAGLERVTTGDIWIDRKRVTEMEPKDRGIAMVFQNYALYPHMSVEENMAWGLKIRGMGKQQIAERVKEAARILELDGLLKRRPRELSGGQRQRVAMGRAIVREPAVFLFDEPLSNLDAKLRVQMRLELQQLHRRLKTTSLYVTHDQVEAMTLAQRVMVMNGGVAEQIGTPVEVYEKPASLFVASFIGSPAMNLLAGRVNNEGTHFELDGGITLLLNGGYRQYAGRKMTLGIRPEHIALSSRAEGGVPLVMDTLEILGADNLAHGRWGEQKLVVRLAHQERPTAGSTLWLHLPENQLHLFDGETGQRV.

The 232-residue stretch at Leu-4–Ile-235 folds into the ABC transporter domain. Residue Gly-37–Ser-44 coordinates ATP.

The protein belongs to the ABC transporter superfamily. sn-glycerol-3-phosphate importer (TC 3.A.1.1.3) family. In terms of assembly, the complex is composed of two ATP-binding proteins (UgpC), two transmembrane proteins (UgpA and UgpE) and a solute-binding protein (UgpB).

The protein localises to the cell inner membrane. It catalyses the reaction sn-glycerol 3-phosphate(out) + ATP + H2O = sn-glycerol 3-phosphate(in) + ADP + phosphate + H(+). In terms of biological role, part of the ABC transporter complex UgpBAEC involved in sn-glycerol-3-phosphate (G3P) import. Responsible for energy coupling to the transport system. This chain is sn-glycerol-3-phosphate import ATP-binding protein UgpC, found in Escherichia coli O6:K15:H31 (strain 536 / UPEC).